Consider the following 396-residue polypeptide: Elongation factor Tu 1 (396 aa).

Residues 10–206 (KPHVNVGTIG…QIDSYIPEPE (197 aa)) form the tr-type G domain. Residues 19-26 (GHIDHGKT) form a G1 region. 19–26 (GHIDHGKT) serves as a coordination point for GTP. Threonine 26 contacts Mg(2+). The segment at 60–64 (GITIA) is G2. A G3 region spans residues 81-84 (DCPG). Residues 81-85 (DCPGH) and 136-139 (NKCD) contribute to the GTP site. The interval 136–139 (NKCD) is G4. The segment at 174–176 (SAL) is G5.

This sequence belongs to the TRAFAC class translation factor GTPase superfamily. Classic translation factor GTPase family. EF-Tu/EF-1A subfamily. Monomer.

The protein resides in the cytoplasm. It catalyses the reaction GTP + H2O = GDP + phosphate + H(+). GTP hydrolase that promotes the GTP-dependent binding of aminoacyl-tRNA to the A-site of ribosomes during protein biosynthesis. The protein is Elongation factor Tu 1 of Desulfotalea psychrophila (strain LSv54 / DSM 12343).